A 357-amino-acid chain; its full sequence is S-adenosyl-L-methionine:benzoic acid/salicylic acid carboxyl methyltransferase 1 (357 aa).

Y18 contacts S-adenosyl-L-homocysteine. Residue Q25 coordinates benzoate. S-adenosyl-L-homocysteine contacts are provided by C59, N64, D96, L97, S135, and F136. W157 provides a ligand contact to benzoate. 4 residues coordinate Mg(2+): N168, D254, F256, and N257. Q260 contributes to the benzoate binding site.

It belongs to the methyltransferase superfamily. Type-7 methyltransferase family. Predominantly expressed in petal limbs and tubes of corollas.

It carries out the reaction benzoate + S-adenosyl-L-methionine = methyl benzoate + S-adenosyl-L-homocysteine. The catalysed reaction is salicylate + S-adenosyl-L-methionine = methyl salicylate + S-adenosyl-L-homocysteine. It functions in the pathway aromatic compound metabolism. In terms of biological role, converts benzoic acid into the volatile ester methyl benzoates. This scent, mostly produced in a rhythmical, diurnal manner, attracts the pollinators. The protein is S-adenosyl-L-methionine:benzoic acid/salicylic acid carboxyl methyltransferase 1 of Petunia hybrida (Petunia).